A 755-amino-acid chain; its full sequence is Thermostable beta-glucosidase B (755 aa).

Residue D231 is part of the active site.

The protein belongs to the glycosyl hydrolase 3 family.

The enzyme catalyses Hydrolysis of terminal, non-reducing beta-D-glucosyl residues with release of beta-D-glucose.. Its pathway is glycan metabolism; cellulose degradation. This is Thermostable beta-glucosidase B (bglB) from Acetivibrio thermocellus (strain ATCC 27405 / DSM 1237 / JCM 9322 / NBRC 103400 / NCIMB 10682 / NRRL B-4536 / VPI 7372) (Clostridium thermocellum).